Consider the following 64-residue polypeptide: IKDGYIVDDVNCTYFCGRNAYCNEECTKLKGESGYCQWASPYGNACYCYKLPDHVRTKGPGRCR.

Residues 2–64 enclose the LCN-type CS-alpha/beta domain; sequence KDGYIVDDVN…VRTKGPGRCR (63 aa). Cystine bridges form between Cys12-Cys63, Cys16-Cys36, Cys22-Cys46, and Cys26-Cys48. Arg64 is modified (arginine amide).

This sequence belongs to the long (4 C-C) scorpion toxin superfamily. Sodium channel inhibitor family. Alpha subfamily. As to expression, expressed by the venom gland.

The protein localises to the secreted. Alpha toxins bind voltage-independently at site-3 of sodium channels (Nav) and inhibit the inactivation of the activated channels, thereby blocking neuronal transmission. The dissociation is voltage-dependent. Is active on mammals and competes for alpha-toxins binding on both mammalian and cockroach sodium channels. This is Alpha-mammal toxin Lqh2 from Leiurus hebraeus (Hebrew deathstalker scorpion).